Here is a 103-residue protein sequence, read N- to C-terminus: MSGRGKGGKGLGKGGAKRHRKVLRDNIQGITKPAIRRLARRGGVKRISGLIYEEIRGVLKVFLENIIKDSVTYTEHARRKTVTAMDIVYSLKRQGRTLYGFGG.

The span at 1-14 (MSGRGKGGKGLGKG) shows a compositional bias: gly residues. Residues 1-20 (MSGRGKGGKGLGKGGAKRHR) are disordered. Residues 17–21 (KRHRK) mediate DNA binding.

The protein belongs to the histone H4 family. In terms of assembly, the nucleosome is a histone octamer containing two molecules each of H2A, H2B, H3 and H4 assembled in one H3-H4 heterotetramer and two H2A-H2B heterodimers. The octamer wraps approximately 147 bp of DNA.

Its subcellular location is the nucleus. The protein resides in the chromosome. In terms of biological role, core component of nucleosome. Nucleosomes wrap and compact DNA into chromatin, limiting DNA accessibility to the cellular machineries which require DNA as a template. Histones thereby play a central role in transcription regulation, DNA repair, DNA replication and chromosomal stability. DNA accessibility is regulated via a complex set of post-translational modifications of histones, also called histone code, and nucleosome remodeling. The protein is Histone H4 of Eimeria tenella (Coccidian parasite).